The sequence spans 289 residues: Ribosomal protein L11 methyltransferase (289 aa).

Residues threonine 135, glycine 156, aspartate 179, and asparagine 225 each coordinate S-adenosyl-L-methionine.

This sequence belongs to the methyltransferase superfamily. PrmA family.

It localises to the cytoplasm. The catalysed reaction is L-lysyl-[protein] + 3 S-adenosyl-L-methionine = N(6),N(6),N(6)-trimethyl-L-lysyl-[protein] + 3 S-adenosyl-L-homocysteine + 3 H(+). Its function is as follows. Methylates ribosomal protein L11. The polypeptide is Ribosomal protein L11 methyltransferase (Chlorobaculum tepidum (strain ATCC 49652 / DSM 12025 / NBRC 103806 / TLS) (Chlorobium tepidum)).